The following is a 477-amino-acid chain: Glycogen synthase (477 aa).

K15 provides a ligand contact to ADP-alpha-D-glucose.

This sequence belongs to the glycosyltransferase 1 family. Bacterial/plant glycogen synthase subfamily.

The catalysed reaction is [(1-&gt;4)-alpha-D-glucosyl](n) + ADP-alpha-D-glucose = [(1-&gt;4)-alpha-D-glucosyl](n+1) + ADP + H(+). It participates in glycan biosynthesis; glycogen biosynthesis. In terms of biological role, synthesizes alpha-1,4-glucan chains using ADP-glucose. The chain is Glycogen synthase from Erwinia tasmaniensis (strain DSM 17950 / CFBP 7177 / CIP 109463 / NCPPB 4357 / Et1/99).